We begin with the raw amino-acid sequence, 105 residues long: Ig lambda-1 chain C region (105 aa).

An Ig-like domain is found at 6-100; the sequence is PSVTLFPPSS…EGHTVEKSLS (95 aa). A disulfide bridge links Cys27 with Cys86.

The protein is Ig lambda-1 chain C region of Mus musculus (Mouse).